We begin with the raw amino-acid sequence, 406 residues long: MALYRNLYLLASLGLSSAAPSKVQRAPDSSIHARAVCTPTAGGDSSTDDVPAITEALSSCGNGGTIVFPEGSTYYLNSVLDLGSCSDCDIQVEGLLKFASDTDYWSGRTAMISVSNVDGLKLRSLTGSGVIDGNGQDAWDLFASDSSYSRPTLLYITGGSNLEISGLRQKNPPNVFNSVKGGATNVVFSNLKMDANSKSDNPPKNTDGFDIGESTYVTITEVTVVNDDDCVAFKPSSNYVTVDTISCTGSHGISVGSLGKSSDDSVKNIYVTGATMINSTKAAGIKTYPSGGDHGTSTVSNVTFNDFTVDNSDYAFQIQSCYGEDDDYCEENPGNAKLTDIVVSSFSGTTSDKYDPVVANLDCGADGTCGISISGFDVKAPSGKSEVLCANTPSDLGVTCTSGASG.

Residues 1 to 18 (MALYRNLYLLASLGLSSA) form the signal peptide. PbH1 repeat units follow at residues 183–213 (ATNVVFSNLKMDANSKSDNPPKNTDGFDIGE), 214–257 (STYV…SVGS), 266–289 (VKNIYVTGATMINSTKAAGIKTYP), 299–320 (VSNVTFNDFTVDNSDYAFQIQS), and 333–375 (PGNA…SISG). Asp-228 serves as the catalytic Proton donor. The active site involves His-251. N-linked (GlcNAc...) asparagine glycosylation is found at Asn-278 and Asn-301.

The protein belongs to the glycosyl hydrolase 28 family.

It is found in the secreted. In terms of biological role, pectinolytic enzyme involved in the degradation of xylogalacturonan (xga), a galacturonan backbone heavily substituted with xylose, and which is one important component of the hairy regions of pectin. Activity requires a galacturonic acid backbone substituted with xylose. This is Endo-xylogalacturonan hydrolase A (xghA) from Aspergillus tubingensis.